Consider the following 244-residue polypeptide: Krueppel-like factor 9 (244 aa).

Disordered regions lie at residues 26 to 51 and 79 to 143; these read EHGG…GDPG and PSVC…EKRH. Residues 32–51 show a composition bias toward basic and acidic residues; sequence EAERLRLPEREVTKEHGDPG. The residue at position 122 (S122) is a Phosphoserine. The span at 134 to 143 shows a compositional bias: basic residues; the sequence is KGKHASEKRH. C2H2-type zinc fingers lie at residues 143–167, 173–197, and 203–225; these read HKCP…YRVH, FPCT…YRTH, and FRCP…ARRH.

It belongs to the Sp1 C2H2-type zinc-finger protein family. In terms of assembly, interacts with ZZEF1.

It localises to the nucleus. Transcription factor that binds to GC box promoter elements. Selectively activates mRNA synthesis from genes containing tandem repeats of GC boxes but represses genes with a single GC box. Acts as an epidermal circadian transcription factor regulating keratinocyte proliferation. The sequence is that of Krueppel-like factor 9 (Klf9) from Mus musculus (Mouse).